A 371-amino-acid polypeptide reads, in one-letter code: Ligninase LG5 (371 aa).

The N-terminal stretch at 1–21 is a signal peptide; sequence MAFKKLLAVLTAALSLRAAQG. The propeptide occupies 22-27; that stretch reads AAVEKR. Cystine bridges form between Cys30–Cys42, Cys41–Cys311, Cys61–Cys146, and Cys275–Cys344. His74 functions as the Proton acceptor in the catalytic mechanism. Positions 75, 92, 94, and 96 each coordinate Ca(2+). A heme b-binding site is contributed by His202. Ca(2+) is bound by residues Ser203, Asp220, Thr222, Ile225, and Asp227. An N-linked (GlcNAc...) asparagine glycan is attached at Asn283. Residues 349 to 371 form a disordered region; it reads FPTLSTLPGPATSVARIPPPPGA.

This sequence belongs to the peroxidase family. Ligninase subfamily. Ca(2+) serves as cofactor. Heme b is required as a cofactor.

It catalyses the reaction 1-(3,4-dimethoxyphenyl)-2-(2-methoxyphenoxy)propane-1,3-diol + H2O2 = 3,4-dimethoxybenzaldehyde + guaiacol + glycolaldehyde + H2O. It carries out the reaction 2 (3,4-dimethoxyphenyl)methanol + H2O2 = 2 (3,4-dimethoxyphenyl)methanol radical + 2 H2O. Its pathway is secondary metabolite metabolism; lignin degradation. In terms of biological role, depolymerization of lignin. Catalyzes the C(alpha)-C(beta) cleavage of the propyl side chains of lignin. This Phanerodontia chrysosporium (White-rot fungus) protein is Ligninase LG5 (GLG5).